The primary structure comprises 196 residues: Secreted phosphoprotein 24 (196 aa).

A signal peptide spans 1–19; the sequence is MKWCGVLMVALLQSLCCSG. 2 disulfide bridges follow: C83-C94 and C107-C125. The segment at 125-196 is disordered; that stretch reads CGQDSSSSES…RGDSFGNHLE (72 aa). The segment covering 129 to 138 has biased composition (low complexity); the sequence is SSSSESSSEE.

The protein belongs to the SPP2 family. In terms of processing, multiply phosphorylated at serine residues.

The protein resides in the secreted. Could coordinate an aspect of bone turnover. This chain is Secreted phosphoprotein 24 (spp2), found in Salmo salar (Atlantic salmon).